Consider the following 206-residue polypeptide: Large ribosomal subunit protein uL4 (206 aa).

A disordered region spans residues 46–78 (GNRAQKDREQVKHTTKKPWRQKGTGRARAGMSS). Positions 58–70 (HTTKKPWRQKGTG) are enriched in basic residues.

This sequence belongs to the universal ribosomal protein uL4 family. Part of the 50S ribosomal subunit.

In terms of biological role, one of the primary rRNA binding proteins, this protein initially binds near the 5'-end of the 23S rRNA. It is important during the early stages of 50S assembly. It makes multiple contacts with different domains of the 23S rRNA in the assembled 50S subunit and ribosome. Forms part of the polypeptide exit tunnel. This is Large ribosomal subunit protein uL4 from Burkholderia lata (strain ATCC 17760 / DSM 23089 / LMG 22485 / NCIMB 9086 / R18194 / 383).